A 146-amino-acid chain; its full sequence is Acidic phospholipase A2 S5-32M (146 aa).

The first 19 residues, 1 to 19 (MYPAHLLVLLAVCVSLLGA), serve as a signal peptide directing secretion. Positions 20-27 (ASIPPQPL) are excised as a propeptide. 7 disulfides stabilise this stretch: Cys38–Cys98, Cys54–Cys145, Cys56–Cys72, Cys71–Cys126, Cys78–Cys119, Cys87–Cys112, and Cys105–Cys117. Tyr55, Gly57, and Gly59 together coordinate Ca(2+). The active site involves His75. Asp76 lines the Ca(2+) pocket. The active site involves Asp120.

It belongs to the phospholipase A2 family. Group I subfamily. D49 sub-subfamily. It depends on Ca(2+) as a cofactor. Expressed by the venom gland.

It is found in the secreted. The enzyme catalyses a 1,2-diacyl-sn-glycero-3-phosphocholine + H2O = a 1-acyl-sn-glycero-3-phosphocholine + a fatty acid + H(+). In terms of biological role, snake venom phospholipase A2 (PLA2) that inhibits collagen-induced platelet aggregation. PLA2 catalyzes the calcium-dependent hydrolysis of the 2-acyl groups in 3-sn-phosphoglycerides. This Austrelaps superbus (Lowland copperhead snake) protein is Acidic phospholipase A2 S5-32M.